Consider the following 73-residue polypeptide: Putative defensin-like protein 57 (73 aa).

A signal peptide spans 1–25; that stretch reads MRFTSMIFVLVVILINSLFNFNVLA. Intrachain disulfides connect C37/C71, C41/C64, C50/C69, and C54/C70.

Belongs to the DEFL family.

The protein resides in the secreted. The protein is Putative defensin-like protein 57 of Arabidopsis thaliana (Mouse-ear cress).